Consider the following 551-residue polypeptide: Cytochrome c oxidase subunit 1 (551 aa).

Residues 29-49 traverse the membrane as a helical segment; that stretch reads VIGIQYLVTSFLFFFIGGSFA. Residue His76 coordinates Fe(II)-heme a. Transmembrane regions (helical) follow at residues 79 to 99, 113 to 133, 156 to 176, 205 to 225, 245 to 265, 283 to 303, 313 to 333, 348 to 368, 382 to 402, 424 to 444, and 466 to 486; these read IMIF…LIPL, AVAF…FFVG, LWIL…INFV, LILL…FDLI, LFWF…FGVI, IAYS…HHMF, MFFM…IFSW, MLFA…GVMV, FVVG…LFSG, FILT…LGLM, and IGAY…FWSL. Positions 251, 255, 300, and 301 each coordinate Cu cation. The 1'-histidyl-3'-tyrosine (His-Tyr) cross-link spans 251–255; the sequence is HPAVY. His386 contacts heme a3. His388 serves as a coordination point for Fe(II)-heme a.

It belongs to the heme-copper respiratory oxidase family. It depends on Cu(2+) as a cofactor. Heme serves as cofactor.

Its subcellular location is the cell membrane. It catalyses the reaction 4 Fe(II)-[cytochrome c] + O2 + 8 H(+)(in) = 4 Fe(III)-[cytochrome c] + 2 H2O + 4 H(+)(out). It participates in energy metabolism; oxidative phosphorylation. Functionally, cytochrome c oxidase is the component of the respiratory chain that catalyzes the reduction of oxygen to water. Subunits 1-3 form the functional core of the enzyme complex. CO I is the catalytic subunit of the enzyme. Electrons originating in cytochrome c are transferred via the copper A center of subunit 2 and heme A of subunit 1 to the bimetallic center formed by heme A3 and copper B. This chain is Cytochrome c oxidase subunit 1 (ctaD), found in Synechocystis sp. (strain ATCC 27184 / PCC 6803 / Kazusa).